Reading from the N-terminus, the 159-residue chain is ATP synthase subunit b (159 aa).

Residues 2-22 form a helical membrane-spanning segment; that stretch reads EFNLVTIGFTIVNFIILMLIL.

Belongs to the ATPase B chain family. In terms of assembly, F-type ATPases have 2 components, F(1) - the catalytic core - and F(0) - the membrane proton channel. F(1) has five subunits: alpha(3), beta(3), gamma(1), delta(1), epsilon(1). F(0) has three main subunits: a(1), b(2) and c(10-14). The alpha and beta chains form an alternating ring which encloses part of the gamma chain. F(1) is attached to F(0) by a central stalk formed by the gamma and epsilon chains, while a peripheral stalk is formed by the delta and b chains.

The protein resides in the cell membrane. F(1)F(0) ATP synthase produces ATP from ADP in the presence of a proton or sodium gradient. F-type ATPases consist of two structural domains, F(1) containing the extramembraneous catalytic core and F(0) containing the membrane proton channel, linked together by a central stalk and a peripheral stalk. During catalysis, ATP synthesis in the catalytic domain of F(1) is coupled via a rotary mechanism of the central stalk subunits to proton translocation. Its function is as follows. Component of the F(0) channel, it forms part of the peripheral stalk, linking F(1) to F(0). This Clostridium acetobutylicum (strain ATCC 824 / DSM 792 / JCM 1419 / IAM 19013 / LMG 5710 / NBRC 13948 / NRRL B-527 / VKM B-1787 / 2291 / W) protein is ATP synthase subunit b.